Consider the following 138-residue polypeptide: Basic phospholipase A2 BP-I (138 aa).

Positions 1–16 (MRTLWIMAVLLLGVDG) are cleaved as a signal peptide. 7 cysteine pairs are disulfide-bonded: C42/C132, C44/C60, C59/C112, C65/C138, C66/C105, C73/C98, and C91/C103. Residues G45 and G47 each contribute to the Ca(2+) site. The active site involves H63. The active site involves D106.

This sequence belongs to the phospholipase A2 family. Group II subfamily. K49 sub-subfamily. Requires Ca(2+) as cofactor. As to expression, expressed by the venom gland.

Its subcellular location is the secreted. The enzyme catalyses a 1,2-diacyl-sn-glycero-3-phosphocholine + H2O = a 1-acyl-sn-glycero-3-phosphocholine + a fatty acid + H(+). Its function is as follows. Snake venom phospholipase A2 (PLA2) that has strong myotoxic activity with a low phospholipase A2 activity. PLA2 catalyzes the calcium-dependent hydrolysis of the 2-acyl groups in 3-sn-phosphoglycerides. In Protobothrops flavoviridis (Habu), this protein is Basic phospholipase A2 BP-I.